We begin with the raw amino-acid sequence, 237 residues long: Probable S-methyl-5'-thioinosine phosphorylase (237 aa).

Residues threonine 12 and 54–55 (RH) contribute to the phosphate site. Methionine 187 lines the substrate pocket. Residue threonine 188 coordinates phosphate. 211 to 213 (NWA) is a binding site for substrate.

This sequence belongs to the PNP/MTAP phosphorylase family. MTAP subfamily. As to quaternary structure, homotrimer.

It catalyses the reaction S-methyl-5'-thioinosine + phosphate = 5-(methylsulfanyl)-alpha-D-ribose 1-phosphate + hypoxanthine. The protein operates within purine metabolism; purine nucleoside salvage. In terms of biological role, catalyzes the reversible phosphorylation of S-methyl-5'-thioinosine (MTI) to hypoxanthine and 5-methylthioribose-1-phosphate. Involved in the breakdown of S-methyl-5'-thioadenosine (MTA), a major by-product of polyamine biosynthesis. Catabolism of (MTA) occurs via deamination to MTI and phosphorolysis to hypoxanthine. In Xylella fastidiosa (strain 9a5c), this protein is Probable S-methyl-5'-thioinosine phosphorylase.